The following is a 426-amino-acid chain: Enolase (426 aa).

Residue Gln-163 participates in (2R)-2-phosphoglycerate binding. Glu-205 acts as the Proton donor in catalysis. Mg(2+)-binding residues include Asp-242, Glu-283, and Asp-310. (2R)-2-phosphoglycerate is bound by residues Lys-335, Arg-364, Ser-365, and Lys-386. Lys-335 functions as the Proton acceptor in the catalytic mechanism.

The protein belongs to the enolase family. Requires Mg(2+) as cofactor.

It localises to the cytoplasm. The protein resides in the secreted. The protein localises to the cell surface. The catalysed reaction is (2R)-2-phosphoglycerate = phosphoenolpyruvate + H2O. It participates in carbohydrate degradation; glycolysis; pyruvate from D-glyceraldehyde 3-phosphate: step 4/5. Its function is as follows. Catalyzes the reversible conversion of 2-phosphoglycerate (2-PG) into phosphoenolpyruvate (PEP). It is essential for the degradation of carbohydrates via glycolysis. This is Enolase from Cutibacterium acnes (strain DSM 16379 / KPA171202) (Propionibacterium acnes).